The chain runs to 255 residues: Imidazole glycerol phosphate synthase subunit HisF (255 aa).

Catalysis depends on residues aspartate 13 and aspartate 132.

Belongs to the HisA/HisF family. As to quaternary structure, heterodimer of HisH and HisF.

Its subcellular location is the cytoplasm. It carries out the reaction 5-[(5-phospho-1-deoxy-D-ribulos-1-ylimino)methylamino]-1-(5-phospho-beta-D-ribosyl)imidazole-4-carboxamide + L-glutamine = D-erythro-1-(imidazol-4-yl)glycerol 3-phosphate + 5-amino-1-(5-phospho-beta-D-ribosyl)imidazole-4-carboxamide + L-glutamate + H(+). It functions in the pathway amino-acid biosynthesis; L-histidine biosynthesis; L-histidine from 5-phospho-alpha-D-ribose 1-diphosphate: step 5/9. Its function is as follows. IGPS catalyzes the conversion of PRFAR and glutamine to IGP, AICAR and glutamate. The HisF subunit catalyzes the cyclization activity that produces IGP and AICAR from PRFAR using the ammonia provided by the HisH subunit. In Leptospira biflexa serovar Patoc (strain Patoc 1 / ATCC 23582 / Paris), this protein is Imidazole glycerol phosphate synthase subunit HisF.